We begin with the raw amino-acid sequence, 269 residues long: Diaminopimelate epimerase (269 aa).

The substrate site is built by Asn-13, Gln-46, and Asn-65. The Proton donor role is filled by Cys-74. Residues 75–76 (GN), Asn-149, Asn-182, and 200–201 (ER) each bind substrate. Residue Cys-209 is the Proton acceptor of the active site. 210–211 (GT) contacts substrate.

It belongs to the diaminopimelate epimerase family. As to quaternary structure, homodimer.

The protein resides in the cytoplasm. It carries out the reaction (2S,6S)-2,6-diaminopimelate = meso-2,6-diaminopimelate. It functions in the pathway amino-acid biosynthesis; L-lysine biosynthesis via DAP pathway; DL-2,6-diaminopimelate from LL-2,6-diaminopimelate: step 1/1. Functionally, catalyzes the stereoinversion of LL-2,6-diaminopimelate (L,L-DAP) to meso-diaminopimelate (meso-DAP), a precursor of L-lysine and an essential component of the bacterial peptidoglycan. The chain is Diaminopimelate epimerase from Zymomonas mobilis subsp. mobilis (strain ATCC 31821 / ZM4 / CP4).